A 78-amino-acid polypeptide reads, in one-letter code: Omega-conotoxin-like VnMKLT1-0111 (78 aa).

The N-terminal stretch at 1–22 (MKLTCMMIVAVLFLTAWTFVTA) is a signal peptide. Residues 23–48 (DSRNGLEYLFPKAHYEMNPEASKLNK) constitute a propeptide that is removed on maturation. 3 cysteine pairs are disulfide-bonded: Cys-52-Cys-69, Cys-59-Cys-73, and Cys-68-Cys-77.

Belongs to the conotoxin O1 superfamily. In terms of tissue distribution, expressed by the venom duct.

The protein resides in the secreted. In terms of biological role, omega-conotoxins act at presynaptic membranes, they bind and block voltage-gated calcium channels (Cav). The protein is Omega-conotoxin-like VnMKLT1-0111 of Conus ventricosus (Mediterranean cone).